The following is an 86-amino-acid chain: Cytochrome c oxidase subunit 6B1 (86 aa).

Ala-2 is modified (N-acetylalanine). A CHCH domain is found at 27–73; that stretch reads TRNCWQNYLDFHRCEKAMTAKGGDVSVCEWYRRVYKSLCPISWVSTW. The Cx9C motif motif lies at 30–40; that stretch reads CWQNYLDFHRC. 2 disulfide bridges follow: Cys-30–Cys-65 and Cys-40–Cys-54. A Cx10C motif motif is present at residues 54–65; that stretch reads CEWYRRVYKSLC. Position 62 is an N6-acetyllysine (Lys-62).

The protein belongs to the cytochrome c oxidase subunit 6B family. As to quaternary structure, component of the cytochrome c oxidase (complex IV, CIV), a multisubunit enzyme composed of 14 subunits. The complex is composed of a catalytic core of 3 subunits MT-CO1, MT-CO2 and MT-CO3, encoded in the mitochondrial DNA, and 11 supernumerary subunits COX4I1 (or COX4I2), COX5A, COX5B, COX6A2 (or COX6A1), COX6B1 (or COX6B2), COX6C, COX7A1 (or COX7A2), COX7B, COX7C, COX8B and NDUFA4, which are encoded in the nuclear genome. The complex exists as a monomer or a dimer and forms supercomplexes (SCs) in the inner mitochondrial membrane with NADH-ubiquinone oxidoreductase (complex I, CI) and ubiquinol-cytochrome c oxidoreductase (cytochrome b-c1 complex, complex III, CIII), resulting in different assemblies (supercomplex SCI(1)III(2)IV(1) and megacomplex MCI(2)III(2)IV(2)).

It localises to the mitochondrion inner membrane. It functions in the pathway energy metabolism; oxidative phosphorylation. Component of the cytochrome c oxidase, the last enzyme in the mitochondrial electron transport chain which drives oxidative phosphorylation. The respiratory chain contains 3 multisubunit complexes succinate dehydrogenase (complex II, CII), ubiquinol-cytochrome c oxidoreductase (cytochrome b-c1 complex, complex III, CIII) and cytochrome c oxidase (complex IV, CIV), that cooperate to transfer electrons derived from NADH and succinate to molecular oxygen, creating an electrochemical gradient over the inner membrane that drives transmembrane transport and the ATP synthase. Cytochrome c oxidase is the component of the respiratory chain that catalyzes the reduction of oxygen to water. Electrons originating from reduced cytochrome c in the intermembrane space (IMS) are transferred via the dinuclear copper A center (CU(A)) of subunit 2 and heme A of subunit 1 to the active site in subunit 1, a binuclear center (BNC) formed by heme A3 and copper B (CU(B)). The BNC reduces molecular oxygen to 2 water molecules using 4 electrons from cytochrome c in the IMS and 4 protons from the mitochondrial matrix. The sequence is that of Cytochrome c oxidase subunit 6B1 (COX6B1) from Bos taurus (Bovine).